The following is a 57-amino-acid chain: Cytochrome b-c1 complex subunit 10, mitochondrial (57 aa).

Residues 1 to 23 (MAGTSGLLNAVKPKIQTIDIQAA) lie on the Mitochondrial matrix side of the membrane. Residues 24–44 (AGWGIAAAAGAIWVVQPFGWI) form a helical membrane-spanning segment. Residues 45 to 57 (KKTFIDPPPTEEK) lie on the Mitochondrial intermembrane side of the membrane.

Belongs to the UQCR11/QCR10 family. As to quaternary structure, component of the ubiquinol-cytochrome c oxidoreductase (cytochrome b-c1 complex, complex III, CIII), a multisubunit enzyme composed of 10 subunits. The complex is composed of 3 respiratory subunits cytochrome b (MT-CYB), cytochrome c1 (CYC1-1 or CYC1-2) and Rieske protein (UCR1-1 or UCR1-2), 2 core protein subunits MPPalpha1 (or MPPalpha2) and MPPB, and 5 low-molecular weight protein subunits QCR7-1 (or QCR7-2), UCRQ-1 (or UCRQ-2), QCR9, UCRY and probably QCR6-1 (or QCR6-2). The complex exists as an obligatory dimer and forms supercomplexes (SCs) in the inner mitochondrial membrane with NADH-ubiquinone oxidoreductase (complex I, CI), resulting in different assemblies (supercomplexes SCI(1)III(2) and SCI(2)III(4)).

It localises to the mitochondrion inner membrane. In terms of biological role, component of the ubiquinol-cytochrome c oxidoreductase, a multisubunit transmembrane complex that is part of the mitochondrial electron transport chain which drives oxidative phosphorylation. The respiratory chain contains 3 multisubunit complexes succinate dehydrogenase (complex II, CII), ubiquinol-cytochrome c oxidoreductase (cytochrome b-c1 complex, complex III, CIII) and cytochrome c oxidase (complex IV, CIV), that cooperate to transfer electrons derived from NADH and succinate to molecular oxygen, creating an electrochemical gradient over the inner membrane that drives transmembrane transport and the ATP synthase. The cytochrome b-c1 complex catalyzes electron transfer from ubiquinol to cytochrome c, linking this redox reaction to translocation of protons across the mitochondrial inner membrane, with protons being carried across the membrane as hydrogens on the quinol. In the process called Q cycle, 2 protons are consumed from the matrix, 4 protons are released into the intermembrane space and 2 electrons are passed to cytochrome c. This chain is Cytochrome b-c1 complex subunit 10, mitochondrial (UCRY), found in Arabidopsis thaliana (Mouse-ear cress).